Consider the following 39-residue polypeptide: Alpha-conotoxin ArIA (39 aa).

Positions 1 to 17 (SDGRNVAAKAFHRIGRT) are excised as a propeptide. Intrachain disulfides connect cysteine 22-cysteine 28 and cysteine 23-cysteine 36. The tract at residues 24–26 (SNP) is ser-Xaa-Pro motif, crucial for potent interaction with nAChR. Position 33 is a 4-hydroxyproline; in ArIA (proline 33).

This sequence belongs to the conotoxin A superfamily. In terms of tissue distribution, expressed by the venom duct.

It localises to the secreted. Alpha-conotoxins act on postsynaptic membranes, they bind to the nicotinic acetylcholine receptors (nAChR) and thus inhibit them. This toxin acts as a competitive inhibitor and is 3-fold more potent on alpha-7/CHRNA7 nAChRs (IC(50)=6 nM) than on alpha-3-beta-2/CHRNA3-CHRNB2 nAChR (IC(50)=18 nM). Its function is as follows. Acts as a competitive inhibitor and is 33-fold more potent on alpha-7/CHRNA7 nAChRs (IC(50)=1.8 nM) than on alpha-3-beta-2/CHRNA3-CHRNB2 nAChR (IC(50)=60.1 nM). The sequence is that of Alpha-conotoxin ArIA from Conus arenatus (Sand-dusted cone).